A 462-amino-acid chain; its full sequence is Elongation factor 1-alpha (462 aa).

A N,N,N-trimethylglycine modification is found at Gly2. The residue at position 3 (Lys3) is an N6,N6-dimethyllysine; alternate. Position 3 is an N6-methyllysine; alternate (Lys3). Residues 5-242 (KAHVNVVVIG…DAIEPPVRPS (238 aa)) form the tr-type G domain. The segment at 14-21 (GHVDSGKS) is G1. 14 to 21 (GHVDSGKS) contributes to the GTP binding site. Residue Lys30 is modified to N6-methyllysine. Residues 70–74 (GITID) are G2. Position 79 is an N6,N6,N6-trimethyllysine (Lys79). The G3 stretch occupies residues 91–94 (DAPG). Residues 91–95 (DAPGH) and 153–156 (NKMD) contribute to the GTP site. Residues 153–156 (NKMD) form a G4 region. The tract at residues 192-194 (SGW) is G5. Position 318 is an N6,N6-dimethyllysine; alternate (Lys318). Lys318 carries the post-translational modification N6-methyllysine; alternate. N6-methyllysine is present on Lys392.

This sequence belongs to the TRAFAC class translation factor GTPase superfamily. Classic translation factor GTPase family. EF-Tu/EF-1A subfamily.

It localises to the cytoplasm. In terms of biological role, this protein promotes the GTP-dependent binding of aminoacyl-tRNA to the A-site of ribosomes during protein biosynthesis. The chain is Elongation factor 1-alpha (TEF1) from Serendipita indica (Root endophyte fungus).